The sequence spans 171 residues: Cardioactive peptide (171 aa).

An N-terminal signal peptide occupies residues 1-26 (MQMYHVVLGCSLAILLVILDIPQASC). Positions 27 to 49 (DDVVIQKRQVDPAEMDRLLDPKR) are excised as a propeptide. Residues C54 and C60 are joined by a disulfide bond. At C60 the chain carries Cysteine amide. The propeptide occupies 64–171 (RSDESMGTLV…QEEITKPWSR (108 aa)). A disordered region spans residues 116–171 (QSNQFGAGMDRPLPLPIAGYRRKRFADPESQAPAPHSNLPRATSQLQEEITKPWSR).

In terms of tissue distribution, central nervous system; most neurons exhibit coexpression with burs.

The protein resides in the secreted. In terms of biological role, cardioregulatory neurohormone that increases heart beat rate during adult wing inflation; has no effect on beat amplitude. The effect of CCAP is both ino- and chronotropic. The polypeptide is Cardioactive peptide (Periplaneta americana (American cockroach)).